The chain runs to 118 residues: Small ribosomal subunit protein uS13 (118 aa).

Residues Ser-94–Arg-118 form a disordered region.

Belongs to the universal ribosomal protein uS13 family. In terms of assembly, part of the 30S ribosomal subunit. Forms a loose heterodimer with protein S19. Forms two bridges to the 50S subunit in the 70S ribosome.

Located at the top of the head of the 30S subunit, it contacts several helices of the 16S rRNA. In the 70S ribosome it contacts the 23S rRNA (bridge B1a) and protein L5 of the 50S subunit (bridge B1b), connecting the 2 subunits; these bridges are implicated in subunit movement. Contacts the tRNAs in the A and P-sites. This is Small ribosomal subunit protein uS13 from Photobacterium profundum (strain SS9).